Consider the following 671-residue polypeptide: Putative protein kinase C delta type homolog (671 aa).

Residues Met-1–His-136 are disordered. The span at Ser-14–Ser-27 shows a compositional bias: low complexity. Positions Ala-57–Arg-101 are enriched in basic and acidic residues. Gly residues predominate over residues Ser-102–Val-116. 2 consecutive Phorbol-ester/DAG-type zinc fingers follow at residues Gly-144 to Cys-194 and Pro-216 to Cys-266. Positions Phe-343–Phe-601 constitute a Protein kinase domain. ATP contacts are provided by residues Leu-349–Val-357 and Lys-372. Residue Asp-467 is the Proton acceptor of the active site. Residues Arg-602–Asp-671 form the AGC-kinase C-terminal domain.

The protein belongs to the protein kinase superfamily. AGC Ser/Thr protein kinase family. PKC subfamily.

It carries out the reaction L-seryl-[protein] + ATP = O-phospho-L-seryl-[protein] + ADP + H(+). It catalyses the reaction L-threonyl-[protein] + ATP = O-phospho-L-threonyl-[protein] + ADP + H(+). This is Putative protein kinase C delta type homolog from Drosophila melanogaster (Fruit fly).